A 181-amino-acid polypeptide reads, in one-letter code: Mitochondrial inner membrane protein Mpv17 (181 aa).

4 helical membrane-spanning segments follow: residues 20-37, 51-67, 86-103, and 152-169; these read MCIA…AQYL, FSFL…FIWF, LCID…AILF, and VILN…LSYI.

Belongs to the peroxisomal membrane protein PXMP2/4 family.

The protein resides in the mitochondrion inner membrane. In terms of biological role, involved in mitochondria homeostasis. This is Mitochondrial inner membrane protein Mpv17 from Caenorhabditis elegans.